The primary structure comprises 57 residues: UPF0337 protein SCO0678 (57 aa).

2 stretches are compositionally biased toward basic and acidic residues: residues 1–22 and 42–57; these read MAGNEKSRAKMEQAKGKAKEAA and GDARQAKEKGKDVFRH. The disordered stretch occupies residues 1–57; that stretch reads MAGNEKSRAKMEQAKGKAKEAAGRAVGNERMTAEGRAAQSKGDARQAKEKGKDVFRH.

The protein belongs to the UPF0337 (CsbD) family.

This Streptomyces coelicolor (strain ATCC BAA-471 / A3(2) / M145) protein is UPF0337 protein SCO0678.